A 553-amino-acid chain; its full sequence is MSVDENQLENGQLLSSENEASSPFKESIPSRSSLYLIALTVSLLGVQLTWSVELGYGTPYLFSLGLRKEWTSIIWIAGPLTGILIQPIAGILSDRVNSRIGRRRPFMLCASLLGTFSLFLMGWAPDICLFIFSNEVLMKRVTIVLATISIYLLDVAVNVVMASTRSLIVDSVRSDQQHEANSWAGRMIGVGNVLGYLLGYLPLYRIFSFLNFTQLQVFCVLASISLVLTVTITTIFVSERRFPPVEHEKSVAGEIFEFFTTMRQSITALPFTLKRICFVQFFAYFGWFPFLFYITTYVGILYLRHAPKGHEEDWDMATRQGSFALLLFAIISLAANTALPLLLEDTEDDEEDESSDASNNEYNIQERNDLGNIRTGTNTPRLGNLSETTSFRSENEPSRRRLLPSSRSIMTTISSKVQIKGLTLPILWLSSHVLFGVCMLSTIFLQTSWQAQAMVAICGLSWACTLWIPYSLFSSEIGKLGLRESSGKMIGVHNVFISAPQVLSTIIATIVFIQSEGSHRDIADNSIAWVLRIGGISAFLAAYQCRHLLPINF.

Over residues 1–21 the composition is skewed to polar residues; that stretch reads MSVDENQLENGQLLSSENEAS. A disordered region spans residues 1-26; sequence MSVDENQLENGQLLSSENEASSPFKE. Residues 1–33 lie on the Cytoplasmic side of the membrane; that stretch reads MSVDENQLENGQLLSSENEASSPFKESIPSRSS. Residues 34-54 form a helical membrane-spanning segment; it reads LYLIALTVSLLGVQLTWSVEL. The Extracellular portion of the chain corresponds to 55 to 72; that stretch reads GYGTPYLFSLGLRKEWTS. The helical transmembrane segment at 73-93 threads the bilayer; it reads IIWIAGPLTGILIQPIAGILS. The Cytoplasmic segment spans residues 94 to 111; sequence DRVNSRIGRRRPFMLCAS. A helical membrane pass occupies residues 112–132; the sequence is LLGTFSLFLMGWAPDICLFIF. At 133 to 140 the chain is on the extracellular side; it reads SNEVLMKR. A helical membrane pass occupies residues 141–161; that stretch reads VTIVLATISIYLLDVAVNVVM. At 162–186 the chain is on the cytoplasmic side; sequence ASTRSLIVDSVRSDQQHEANSWAGR. Residues 187 to 207 form a helical membrane-spanning segment; sequence MIGVGNVLGYLLGYLPLYRIF. At 208 to 216 the chain is on the extracellular side; the sequence is SFLNFTQLQ. The chain crosses the membrane as a helical span at residues 217–237; it reads VFCVLASISLVLTVTITTIFV. At 238–280 the chain is on the cytoplasmic side; it reads SERRFPPVEHEKSVAGEIFEFFTTMRQSITALPFTLKRICFVQ. The chain crosses the membrane as a helical span at residues 281-301; that stretch reads FFAYFGWFPFLFYITTYVGIL. The Extracellular segment spans residues 302 to 322; sequence YLRHAPKGHEEDWDMATRQGS. Residues 323 to 343 form a helical membrane-spanning segment; that stretch reads FALLLFAIISLAANTALPLLL. Topologically, residues 344-424 are cytoplasmic; sequence EDTEDDEEDE…SKVQIKGLTL (81 aa). Residues 368–399 are disordered; sequence NDLGNIRTGTNTPRLGNLSETTSFRSENEPSR. Over residues 374 to 392 the composition is skewed to polar residues; sequence RTGTNTPRLGNLSETTSFR. Residues 425–445 traverse the membrane as a helical segment; it reads PILWLSSHVLFGVCMLSTIFL. At 446–452 the chain is on the extracellular side; the sequence is QTSWQAQ. Residues 453–473 traverse the membrane as a helical segment; that stretch reads AMVAICGLSWACTLWIPYSLF. At 474 to 494 the chain is on the cytoplasmic side; sequence SSEIGKLGLRESSGKMIGVHN. The chain crosses the membrane as a helical span at residues 495–515; the sequence is VFISAPQVLSTIIATIVFIQS. The Extracellular portion of the chain corresponds to 516–521; that stretch reads EGSHRD. The chain crosses the membrane as a helical span at residues 522 to 542; sequence IADNSIAWVLRIGGISAFLAA. The Cytoplasmic portion of the chain corresponds to 543-553; it reads YQCRHLLPINF.

This sequence belongs to the glycoside-pentoside-hexuronide (GPH) cation symporter transporter (TC 2.A.2.4) family.

The protein localises to the membrane. In terms of biological role, responsible for the transport of maltose and sucrose into the cell, with the concomitant uptake of protons (symport system). In Schizosaccharomyces pombe (strain 972 / ATCC 24843) (Fission yeast), this protein is General alpha-glucoside permease (sut1).